Here is a 67-residue protein sequence, read N- to C-terminus: UPF0434 protein Lcho_2556 (67 aa).

It belongs to the UPF0434 family.

The chain is UPF0434 protein Lcho_2556 from Leptothrix cholodnii (strain ATCC 51168 / LMG 8142 / SP-6) (Leptothrix discophora (strain SP-6)).